Here is a 217-residue protein sequence, read N- to C-terminus: Probable GTP-binding protein EngB (217 aa).

The EngB-type G domain occupies 24-207 (SQPEICFAGR…HALIESWLIP (184 aa)). GTP-binding positions include 32–39 (GRSNAGKS), 59–63 (GRTQH), 81–84 (DLPG), 148–151 (TKCD), and 185–188 (LFSA). Mg(2+) contacts are provided by Ser-39 and Thr-61.

Belongs to the TRAFAC class TrmE-Era-EngA-EngB-Septin-like GTPase superfamily. EngB GTPase family. The cofactor is Mg(2+).

Necessary for normal cell division and for the maintenance of normal septation. The sequence is that of Probable GTP-binding protein EngB from Paraburkholderia xenovorans (strain LB400).